We begin with the raw amino-acid sequence, 143 residues long: Hemoglobin subunit alpha-2 (143 aa).

N-acetylserine is present on Ser-2. Residues 2 to 143 enclose the Globin domain; sequence SLSSKDKATV…LALALSEKYR (142 aa). Position 60 (His-60) interacts with O2. His-89 is a binding site for heme b.

This sequence belongs to the globin family. Hb 2 is a heterotetramer of two alpha-2 and two beta-1 chains. Hb 3 is a heterotetramer of two alpha-2 and two beta-2 chains. In terms of tissue distribution, red blood cells.

Functionally, involved in oxygen transport from gills to the various peripheral tissues. In Arctogadus glacialis (Arctic cod), this protein is Hemoglobin subunit alpha-2 (hba2).